Consider the following 280-residue polypeptide: Putative transcription factor kapC (280 aa).

The interval 1–102 (MQPALAPHPS…GKRPLSTSKR (102 aa)) is disordered. A compositionally biased stretch (pro residues) spans 39-49 (PQPPAPQPPHM). The segment covering 79-89 (TQPDVTGQETP) has biased composition (polar residues). The region spanning 96-159 (PLSTSKRAAQ…EYIINLQSRL (64 aa)) is the bZIP domain. The interval 97–120 (LSTSKRAAQNRAAQRAFRQRKEAH) is basic motif. Positions 124–155 (LEGKVKAYENMGEAIKALQAENYQLREYIINL) are leucine-zipper. The disordered stretch occupies residues 169–280 (LPGNIDLSQP…EQTHGLPLIS (112 aa)). The span at 197-211 (APPPTAPQQPQPPHA) shows a compositional bias: pro residues.

This sequence belongs to the bZIP family.

The protein resides in the nucleus. Functionally, putative transcription factor. This chain is Putative transcription factor kapC (kapC), found in Neosartorya fischeri (strain ATCC 1020 / DSM 3700 / CBS 544.65 / FGSC A1164 / JCM 1740 / NRRL 181 / WB 181) (Aspergillus fischerianus).